A 360-amino-acid chain; its full sequence is Inward rectifier potassium channel 13 (360 aa).

Topologically, residues 1-50 are cytoplasmic; the sequence is MDSRNCKVNAPLLSQRYRRMVTKDGHSTLQMDGAQRGLVYLRDAWGILMD. A helical transmembrane segment spans residues 51 to 77; that stretch reads MRWRWMMLVFSASFVVHWLVFAVLWYA. Residues 78–105 are Extracellular-facing; it reads VAEMNGDLEIDHDVPPENHTICVKHITS. Positions 106–122 form an intramembrane region, helical; Pore-forming; the sequence is FTAAFSFSLETQLTIGY. The Selectivity filter motif lies at 119 to 124; it reads TIGYGT. Over 123 to 131 the chain is Extracellular; sequence GTMFPSGDC. A helical transmembrane segment spans residues 132–157; it reads PSAIALLAIQMLLGLMLEAFITGAFV. The Cytoplasmic segment spans residues 158–360; the sequence is AKIARPKNRA…FQIAETGLTE (203 aa). Phosphoserine; by PKC is present on S201. S287 is subject to Phosphoserine; by PKA.

Belongs to the inward rectifier-type potassium channel (TC 1.A.2.1) family. KCNJ13 subfamily. As to quaternary structure, homotetramer. Interacts with RAB28; the interaction may facilitate cone outer segments phagocytosis. Phosphorylation at Ser-201 by PKC strongly inhibits ionic currents, while phosphorylation at Ser-287 by PKA increases them.

It localises to the membrane. The protein resides in the cell membrane. It carries out the reaction K(+)(in) = K(+)(out). Its activity is regulated as follows. Inhibited by Ba(2+) and Cs(+), although sensitivity to those inhibitors is much lower than in other Kir channels. Its function is as follows. Inward rectifier potassium channels are characterized by a greater tendency to allow potassium to flow into the cell rather than out of it. Their voltage dependence is regulated by the concentration of extracellular potassium; as external potassium is raised, the voltage range of the channel opening shifts to more positive voltages. The inward rectification is mainly due to the blockage of outward current by internal magnesium. KCNJ13 has a very low single channel conductance, low sensitivity to block by external barium and cesium, and no dependence of its inward rectification properties on the internal blocking particle magnesium. The protein is Inward rectifier potassium channel 13 (Kcnj13) of Rattus norvegicus (Rat).